The following is a 614-amino-acid chain: Chaperone protein DnaK (614 aa).

A Phosphothreonine; by autocatalysis modification is found at threonine 176. The disordered stretch occupies residues tyrosine 576–lysine 614. Over residues glutamine 577–alanine 589 the composition is skewed to low complexity. Over residues alanine 593–lysine 614 the composition is skewed to basic and acidic residues.

It belongs to the heat shock protein 70 family.

Acts as a chaperone. This is Chaperone protein DnaK from Fructilactobacillus sanfranciscensis (Lactobacillus sanfranciscensis).